Consider the following 134-residue polypeptide: Flagellar basal-body rod protein FlgC (134 aa).

Belongs to the flagella basal body rod proteins family. As to quaternary structure, the basal body constitutes a major portion of the flagellar organelle and consists of four rings (L,P,S, and M) mounted on a central rod. The rod consists of about 26 subunits of FlgG in the distal portion, and FlgB, FlgC and FlgF are thought to build up the proximal portion of the rod with about 6 subunits each.

Its subcellular location is the bacterial flagellum basal body. This is Flagellar basal-body rod protein FlgC (flgC) from Salmonella typhi.